A 303-amino-acid polypeptide reads, in one-letter code: Olfactory receptor 10A2 (303 aa).

The Extracellular segment spans residues 1–12 (MSFSSLPTEIQS). A helical membrane pass occupies residues 13–33 (LLFLTFLTIYLVTLMGNCLII). The Cytoplasmic portion of the chain corresponds to 34–41 (LVTLADPM). The helical transmembrane segment at 42–62 (LHSPMYFFLRNLSFLEIGFNL) threads the bilayer. Topologically, residues 63–86 (VIVPKMLGTLLAQDTTISFLGCAT) are extracellular. C84 and C176 are joined by a disulfide. Residues 87 to 107 (QMYFFFFFGVAECFLLATMAY) traverse the membrane as a helical segment. The Cytoplasmic segment spans residues 108–126 (DRYVAICSPLHYPVIMNQR). The chain crosses the membrane as a helical span at residues 127-147 (TRAKLAAASWFPGFPVATVQT). The Extracellular portion of the chain corresponds to 148–184 (TWLFSFPFCGTNKVNHFFCDSPPVLRLVCADTALFEI). Residues 185–204 (YAIVGTILVVMIPCLLILCS) form a helical membrane-spanning segment. Over 205-224 (YTHIAAAILKIPSAKGKNKA) the chain is Cytoplasmic. Residues 225 to 245 (FSTCSSHLLVVSLFYISLSLT) form a helical membrane-spanning segment. The Extracellular portion of the chain corresponds to 246 to 258 (YFRPKSNNSPEGK). The chain crosses the membrane as a helical span at residues 259-279 (KLLSLSYTVMTPMLNPIIYSL). Residues 280-301 (RNNEVKNALSRTVSKALALRNC) are Cytoplasmic-facing.

Belongs to the G-protein coupled receptor 1 family.

The protein resides in the cell membrane. Functionally, odorant receptor. This Homo sapiens (Human) protein is Olfactory receptor 10A2 (OR10A2).